The primary structure comprises 1142 residues: Melanoma-associated antigen C1 (1142 aa).

The segment at 1–132 (MGDKDMPTAG…DVQSPLQNPA (132 aa)) is disordered. The segment covering 13–42 (SLLQSSSESPQSCPEGEDSQSPLQIPQSSP) has biased composition (low complexity). Residue serine 63 is modified to Phosphoserine. Residues 76 to 87 (SQSPLQIPQSSP) show a composition bias toward low complexity. Polar residues predominate over residues 92–103 (TQSPLQNSQSSP). A phosphoserine mark is found at serine 207 and serine 382. Disordered regions lie at residues 502 to 778 (TQST…LQRP) and 791 to 893 (LQSS…SLTD). Polar residues predominate over residues 614 to 626 (SPLQGEEFQSSLQ). Over residues 627-659 (SPVSICSSSTPSSLPQSFPESSQSPPEGPVQSP) the composition is skewed to low complexity. Residues 671–680 (HSQSPLQSPE) are compositionally biased toward polar residues. Low complexity-rich tracts occupy residues 741–762 (QSPV…FPES) and 807–889 (QSPL…LESD). Residues 908–1106 (LDEKVDELAR…ITFPSSYKDA (199 aa)) form the MAGE domain. Residue serine 1063 is modified to Phosphoserine. Residues 1118–1142 (IDTTDDSTATESASSSVMSPSFSSE) form a disordered region. Low complexity predominate over residues 1123–1142 (DSTATESASSSVMSPSFSSE).

As to expression, expressed in testis and in tumors of a wide variety of histologic types.

The protein localises to the cytoplasm. The sequence is that of Melanoma-associated antigen C1 (MAGEC1) from Homo sapiens (Human).